The primary structure comprises 379 residues: 2-nitroimidazole nitrohydrolase (379 aa).

Cys-357 (amidino-cysteine intermediate) is an active-site residue.

Belongs to the arginine deiminase family.

The catalysed reaction is 2-nitroimidazole + H2O = 1,3-dihydro-2H-imidazol-2-one + nitrite + H(+). In terms of biological role, involved in the biodegradation of 2-Nitroimidazole (2NI) which is a natural antibiotic and an analog of the synthetic nitroimidazoles used for treatment of tuberculosis, Chagas disease (also called American Trypanosomiasis) and cancer. Catalyzes the hydrolytic denitration of 2NI to produce imidazol-2-one and nitrite. It is also active against the 2NI synthetic derivative benznidazole. NnhA confers drug resistance to 2NI. The chain is 2-nitroimidazole nitrohydrolase (nnhA) from Mycobacterium sp. (strain JS330).